Consider the following 61-residue polypeptide: uncharacterized protein (61 aa).

This is an uncharacterized protein from Saccharomyces cerevisiae (strain ATCC 204508 / S288c) (Baker's yeast).